A 331-amino-acid polypeptide reads, in one-letter code: C-type lectin domain family 4 member K (331 aa).

Residues 1-41 (MPEAEMKEEAPEAHFTVDKQNISLWPREPPPKQDLSPVLRK) are Cytoplasmic-facing. The helical; Signal-anchor for type II membrane protein transmembrane segment at 42 to 62 (PLCICVAFTCLALVLVTSIVL) threads the bilayer. At 63–331 (QAVFYPRLMG…CKRPYVQTTE (269 aa)) the chain is on the extracellular side. N-linked (GlcNAc...) asparagine glycosylation is found at N90 and N116. Residues 106–197 (DDAEVQMQIV…LKQQSDILEM (92 aa)) are a coiled coil. Residues 205 to 323 (FSGNFYYFSR…CDNTFLFICK (119 aa)) form the C-type lectin domain. 2 disulfide bridges follow: C226–C322 and C298–C314.

Homotrimer. Expressed by Langerhans cells. Expressed in dendritic cells and by scattered cells in lymph nodes and spleen. Also detected in some non-lymphoid tissues such as lung, liver and heart.

It is found in the membrane. Its function is as follows. Calcium-dependent lectin displaying mannose-binding specificity. Induces the formation of Birbeck granules (BGs); is a potent regulator of membrane superimposition and zippering. Binds to sulfated as well as mannosylated glycans, keratan sulfate (KS) and beta-glucans. Facilitates uptake of antigens and is involved in the routing and/or processing of antigen for presentation to T cells. The protein is C-type lectin domain family 4 member K (Cd207) of Mus musculus (Mouse).